The primary structure comprises 37 residues: Large ribosomal subunit protein bL36 (37 aa).

The protein belongs to the bacterial ribosomal protein bL36 family.

The chain is Large ribosomal subunit protein bL36 from Bacillus anthracis (strain A0248).